A 92-amino-acid polypeptide reads, in one-letter code: DNA/RNA-binding protein Alba (92 aa).

At Lys-11 the chain carries N6-acetyllysine.

Belongs to the histone-like Alba family. Acetylated. Acetylation at Lys-11 decreases DNA-binding affinity.

It is found in the cytoplasm. The protein resides in the chromosome. Functionally, binds double-stranded DNA tightly but without sequence specificity. Involved in DNA compaction. The chain is DNA/RNA-binding protein Alba from Pyrobaculum neutrophilum (strain DSM 2338 / JCM 9278 / NBRC 100436 / V24Sta) (Thermoproteus neutrophilus).